Here is a 221-residue protein sequence, read N- to C-terminus: Thiopurine S-methyltransferase (221 aa).

S-adenosyl-L-methionine is bound by residues Trp-12, Leu-47, Glu-68, and Arg-125.

It belongs to the class I-like SAM-binding methyltransferase superfamily. TPMT family.

Its subcellular location is the cytoplasm. It catalyses the reaction S-adenosyl-L-methionine + a thiopurine = S-adenosyl-L-homocysteine + a thiopurine S-methylether.. This is Thiopurine S-methyltransferase from Legionella pneumophila (strain Corby).